A 609-amino-acid chain; its full sequence is mRNA-decapping enzyme 1B (609 aa).

The residue at position 2 (Ala-2) is an N-acetylalanine. Phosphoserine is present on Ser-147. A Phosphotyrosine modification is found at Tyr-191. Disordered regions lie at residues 201-222 and 243-264; these read PVKPSENQQQRIPQPNQTLDPE and TVEPPQTLHQQQQQQQEKLPIR. The span at 205–219 shows a compositional bias: polar residues; that stretch reads SENQQQRIPQPNQTL. 2 positions are modified to phosphoserine: Ser-272 and Ser-333. Disordered regions lie at residues 326-345 and 359-438; these read TGPVRPGSPHNIGTSRGVQN and TPGA…SSGV. Residues 336–345 are compositionally biased toward polar residues; that stretch reads NIGTSRGVQN. Residues 368–378 show a composition bias toward low complexity; the sequence is PSTPAPASSAA. At Thr-389 the chain carries Phosphothreonine. Over residues 418-438 the composition is skewed to polar residues; sequence QSTLPRQTLPISGNQTGSSGV. Phosphoserine occurs at positions 440 and 503.

Belongs to the DCP1 family. In terms of assembly, interacts with DCP1A.

Its subcellular location is the cytoplasm. It is found in the nucleus. The catalysed reaction is a 5'-end (N(7)-methyl 5'-triphosphoguanosine)-ribonucleoside in mRNA + H2O = N(7)-methyl-GDP + a 5'-end phospho-ribonucleoside in mRNA + 2 H(+). May play a role in the degradation of mRNAs, both in normal mRNA turnover and in nonsense-mediated mRNA decay. May remove the 7-methyl guanine cap structure from mRNA molecules, yielding a 5'-phosphorylated mRNA fragment and 7m-GDP. In Pongo abelii (Sumatran orangutan), this protein is mRNA-decapping enzyme 1B (DCP1B).